Consider the following 385-residue polypeptide: Lipid-A-disaccharide synthase 2 (385 aa).

The protein belongs to the LpxB family.

It carries out the reaction a lipid X + a UDP-2-N,3-O-bis[(3R)-3-hydroxyacyl]-alpha-D-glucosamine = a lipid A disaccharide + UDP + H(+). It functions in the pathway bacterial outer membrane biogenesis; LPS lipid A biosynthesis. Its function is as follows. Condensation of UDP-2,3-diacylglucosamine and 2,3-diacylglucosamine-1-phosphate to form lipid A disaccharide, a precursor of lipid A, a phosphorylated glycolipid that anchors the lipopolysaccharide to the outer membrane of the cell. The polypeptide is Lipid-A-disaccharide synthase 2 (Legionella pneumophila subsp. pneumophila (strain Philadelphia 1 / ATCC 33152 / DSM 7513)).